Here is a 370-residue protein sequence, read N- to C-terminus: UDP-N-acetylglucosamine--N-acetylmuramyl-(pentapeptide) pyrophosphoryl-undecaprenol N-acetylglucosamine transferase (370 aa).

UDP-N-acetyl-alpha-D-glucosamine contacts are provided by residues Thr-15–Gly-17, Asn-129, Arg-170, Ser-199, Ile-254, and Gln-299.

It belongs to the glycosyltransferase 28 family. MurG subfamily.

It is found in the cell inner membrane. The catalysed reaction is di-trans,octa-cis-undecaprenyl diphospho-N-acetyl-alpha-D-muramoyl-L-alanyl-D-glutamyl-meso-2,6-diaminopimeloyl-D-alanyl-D-alanine + UDP-N-acetyl-alpha-D-glucosamine = di-trans,octa-cis-undecaprenyl diphospho-[N-acetyl-alpha-D-glucosaminyl-(1-&gt;4)]-N-acetyl-alpha-D-muramoyl-L-alanyl-D-glutamyl-meso-2,6-diaminopimeloyl-D-alanyl-D-alanine + UDP + H(+). The protein operates within cell wall biogenesis; peptidoglycan biosynthesis. Its function is as follows. Cell wall formation. Catalyzes the transfer of a GlcNAc subunit on undecaprenyl-pyrophosphoryl-MurNAc-pentapeptide (lipid intermediate I) to form undecaprenyl-pyrophosphoryl-MurNAc-(pentapeptide)GlcNAc (lipid intermediate II). This is UDP-N-acetylglucosamine--N-acetylmuramyl-(pentapeptide) pyrophosphoryl-undecaprenol N-acetylglucosamine transferase from Magnetococcus marinus (strain ATCC BAA-1437 / JCM 17883 / MC-1).